We begin with the raw amino-acid sequence, 222 residues long: ATP synthase F(0) complex subunit a (222 aa).

Helical transmembrane passes span 7-27 (AFFD…AILL), 64-84 (WSLM…LGLL), 93-113 (QLTV…VLGF), 132-152 (FLIP…PITL), 160-180 (ITAG…LLSV), and 197-219 (ILEL…LYLH).

Belongs to the ATPase A chain family. As to quaternary structure, component of the ATP synthase complex composed at least of ATP5F1A/subunit alpha, ATP5F1B/subunit beta, ATP5MC1/subunit c (homooctomer), MT-ATP6/subunit a, MT-ATP8/subunit 8, ATP5ME/subunit e, ATP5MF/subunit f, ATP5MG/subunit g, ATP5MK/subunit k, ATP5MJ/subunit j, ATP5F1C/subunit gamma, ATP5F1D/subunit delta, ATP5F1E/subunit epsilon, ATP5PF/subunit F6, ATP5PB/subunit b, ATP5PD/subunit d, ATP5PO/subunit OSCP. ATP synthase complex consists of a soluble F(1) head domain (subunits alpha(3) and beta(3)) - the catalytic core - and a membrane F(0) domain - the membrane proton channel (subunits c, a, 8, e, f, g, k and j). These two domains are linked by a central stalk (subunits gamma, delta, and epsilon) rotating inside the F1 region and a stationary peripheral stalk (subunits F6, b, d, and OSCP). Interacts with DNAJC30; interaction is direct.

The protein resides in the mitochondrion inner membrane. The catalysed reaction is H(+)(in) = H(+)(out). Functionally, subunit a, of the mitochondrial membrane ATP synthase complex (F(1)F(0) ATP synthase or Complex V) that produces ATP from ADP in the presence of a proton gradient across the membrane which is generated by electron transport complexes of the respiratory chain. ATP synthase complex consist of a soluble F(1) head domain - the catalytic core - and a membrane F(1) domain - the membrane proton channel. These two domains are linked by a central stalk rotating inside the F(1) region and a stationary peripheral stalk. During catalysis, ATP synthesis in the catalytic domain of F(1) is coupled via a rotary mechanism of the central stalk subunits to proton translocation. With the subunit c (ATP5MC1), forms the proton-conducting channel in the F(0) domain, that contains two crucial half-channels (inlet and outlet) that facilitate proton movement from the mitochondrial intermembrane space (IMS) into the matrix. Protons are taken up via the inlet half-channel and released through the outlet half-channel, following a Grotthuss mechanism. This chain is ATP synthase F(0) complex subunit a, found in Elephas maximus (Indian elephant).